A 352-amino-acid polypeptide reads, in one-letter code: Protein RecA (352 aa).

Residue 68 to 75 coordinates ATP; that stretch reads GPESSGKT.

This sequence belongs to the RecA family.

It localises to the cytoplasm. Functionally, can catalyze the hydrolysis of ATP in the presence of single-stranded DNA, the ATP-dependent uptake of single-stranded DNA by duplex DNA, and the ATP-dependent hybridization of homologous single-stranded DNAs. It interacts with LexA causing its activation and leading to its autocatalytic cleavage. The polypeptide is Protein RecA (Clostridium perfringens (strain SM101 / Type A)).